Reading from the N-terminus, the 519-residue chain is Tachykinin-like peptides receptor 99D (519 aa).

Residues 1–100 (MENRSDFEAD…SFAFVVPWWR (100 aa)) lie on the Extracellular side of the membrane. Residues N3, N19, N22, and N61 are each glycosylated (N-linked (GlcNAc...) asparagine). A helical membrane pass occupies residues 101-123 (QVLWSILFGGMVIVATGGNLIVV). At 124–134 (WIVMTTKRMRT) the chain is on the cytoplasmic side. Residues 135–155 (VTNYFIVNLSIADAMVSSLNV) traverse the membrane as a helical segment. Residues 156–175 (TFNYYYMLDSDWPFGEFYCK) lie on the Extracellular side of the membrane. C174 and C254 are oxidised to a cystine. The chain crosses the membrane as a helical span at residues 176 to 197 (LSQFIAMLSICASVFTLMAISI). Topologically, residues 198–217 (DRYVAIIRPLQPRMSKRCNL) are cytoplasmic. Residues 218-238 (AIAAVIWLASTLISCPMMIIY) form a helical membrane-spanning segment. At 239-270 (RTEEVPVRGLSNRTVCYPEWPDGPTNHSTMES) the chain is on the extracellular side. A helical membrane pass occupies residues 271–292 (LYNILIIILTYFLPIVSMTVTY). Over 293–324 (SRVGIELWGSKTIGECTPRQVENVRSKRRVVK) the chain is Cytoplasmic. Residues 325–346 (MMIVVVLIFAICWLPFHSYFII) form a helical membrane-spanning segment. The Extracellular portion of the chain corresponds to 347–361 (TSCYPAITEAPFIQE). A helical membrane pass occupies residues 362-384 (LYLAIYWLAMSNSMYNPIIYCWM). Residues 385 to 519 (NSRFRYGFKM…STANTTQLLS (135 aa)) are Cytoplasmic-facing. C399 carries the S-palmitoyl cysteine lipid modification. The interval 444-519 (PSSPKSHRIS…STANTTQLLS (76 aa)) is disordered. 2 stretches are compositionally biased toward polar residues: residues 454–465 (HSGTGRSATLRN) and 487–499 (SYQQEMQQRWSGP). Residues 500 to 519 (NSATAVTNSSSTANTTQLLS) show a composition bias toward low complexity.

This sequence belongs to the G-protein coupled receptor 1 family. In terms of tissue distribution, during late embryogenesis (stages 11-15), expressed in the brain and in a specific subset of neurons in each neuromere of the developing ventral ganglion. Expressed in the cortex of the adult brain, which contains the neuronal cell bodies.

It is found in the cell membrane. Functionally, receptor for tachykinin-like peptides. The chain is Tachykinin-like peptides receptor 99D (TkR99D) from Drosophila melanogaster (Fruit fly).